Reading from the N-terminus, the 247-residue chain is Adenosylcobinamide-GDP ribazoletransferase (247 aa).

5 helical membrane-spanning segments follow: residues 34-54 (IITF…VFMV), 59-79 (CGVP…TGGF), 113-133 (GGLA…ELAL), 138-158 (ILAS…LLMY), and 194-214 (VLLP…AIFI).

It belongs to the CobS family. It depends on Mg(2+) as a cofactor.

The protein resides in the cell inner membrane. It carries out the reaction alpha-ribazole + adenosylcob(III)inamide-GDP = adenosylcob(III)alamin + GMP + H(+). The enzyme catalyses alpha-ribazole 5'-phosphate + adenosylcob(III)inamide-GDP = adenosylcob(III)alamin 5'-phosphate + GMP + H(+). The protein operates within cofactor biosynthesis; adenosylcobalamin biosynthesis; adenosylcobalamin from cob(II)yrinate a,c-diamide: step 7/7. In terms of biological role, joins adenosylcobinamide-GDP and alpha-ribazole to generate adenosylcobalamin (Ado-cobalamin). Also synthesizes adenosylcobalamin 5'-phosphate from adenosylcobinamide-GDP and alpha-ribazole 5'-phosphate. The polypeptide is Adenosylcobinamide-GDP ribazoletransferase (Escherichia coli (strain 55989 / EAEC)).